The chain runs to 403 residues: Rhomboid-like protein 15 (403 aa).

5 consecutive transmembrane segments (helical) span residues 22-42 (IPFL…ICLL), 70-90 (AIIF…LVPM), 103-123 (LLYL…LIAS), 141-161 (AIGF…LSGV), and 176-196 (LYPW…SLLG). Catalysis depends on S145, which acts as the Nucleophile. The Charge relay system role is filled by H197. A helical transmembrane segment spans residues 198-218 (LCGILSGFSYSYGLFNFLMPG). The interval 282 to 316 (EASNQSSEDSRFPGRGRTLSTARDPTAPAGETDPN) is disordered. In terms of domain architecture, UBA spans 361-401 (AASEEQIQKLVAMGFDRTQVEVALAAADDDLTVAVEILMSQ).

This sequence belongs to the peptidase S54 family.

The protein resides in the membrane. Probable rhomboid-type serine protease that catalyzes intramembrane proteolysis. May function in senescence. This chain is Rhomboid-like protein 15, found in Arabidopsis thaliana (Mouse-ear cress).